The primary structure comprises 622 residues: Polyamine transporter 3 (622 aa).

Polar residues predominate over residues 1–47 (MNRQESINSFNSDETSSLSDVESQQPQQYIPSESGSKSNMAPNQLKL). The interval 1–76 (MNRQESINSF…VPDVNAPQSS (76 aa)) is disordered. The Cytoplasmic segment spans residues 1–182 (MNRQESINSF…WPAWIRWSYT (182 aa)). Ser-55 carries the post-translational modification Phosphoserine. Thr-98 carries the post-translational modification Phosphothreonine. Phosphoserine is present on residues Ser-101 and Ser-132. The interval 105–152 (TSTAISRTRTRQIDGASSPSSNEDALESDNNEKGKEGDSSGANDEAPD) is disordered. Residues 183–203 (VLLSILVICVAYGSACISGGL) traverse the membrane as a helical segment. The Extracellular segment spans residues 204 to 215 (GTVEKKYHVGME). A helical membrane pass occupies residues 216 to 236 (AAILSVSLMVIGFSLGPLIWS). At 237–245 (PVSDLYGRR) the chain is on the cytoplasmic side. The helical transmembrane segment at 246-266 (VAYFVSMGLYVIFNIPCALAP) threads the bilayer. The Extracellular portion of the chain corresponds to 267 to 275 (NLGSLLACR). The helical transmembrane segment at 276 to 296 (FLCGVWSSSGLCLVGGSIADM) threads the bilayer. Over 297 to 305 (FPSETRGKA) the chain is Cytoplasmic. The helical transmembrane segment at 306–326 (IAFFAFAPYVGPVVGPLVNGF) threads the bilayer. Topologically, residues 327–335 (ISVSTGRMD) are extracellular. A helical transmembrane segment spans residues 336 to 356 (LIFWVNMAFAGVMWIISSAIP). Residues 357–416 (ETYAPVILKRKAARLRKETGNPKIMTEQEAQGVSMGEMMRACLLRPLYFSVTEPVLVATC) lie on the Cytoplasmic side of the membrane. The chain crosses the membrane as a helical span at residues 417–437 (FYVCLIYSLLYAFFFAFPVIF). At 438–446 (GELYGYKDN) the chain is on the extracellular side. A helical transmembrane segment spans residues 447 to 467 (LVGLMFIPIVIGALWALATTF). The Cytoplasmic segment spans residues 468 to 487 (YCENKYLQIVKQRKPTPEDR). Residues 488-508 (LLGAKIGAPFAAIALWILGAT) traverse the membrane as a helical segment. Topologically, residues 509–512 (AYKH) are extracellular. A helical membrane pass occupies residues 513-533 (IIWVGPASAGLAFGFGMVLIY). Over 534–550 (YSLNNYIIDCYVQYASS) the chain is Cytoplasmic. A helical membrane pass occupies residues 551–571 (ALATKVFLRSAGGAAFPLFTI). Residues 572–583 (QMYHKLNLHWGS) lie on the Extracellular side of the membrane. The helical transmembrane segment at 584-604 (WLLAFISTAMIALPFAFSYWG) threads the bilayer. Topologically, residues 605–622 (KGLRHKLSKKDYSIDSIE) are cytoplasmic.

It belongs to the major facilitator superfamily. DHA1 family. Polyamines/proton antiporter (TC 2.A.1.2.16) subfamily.

It localises to the cell membrane. In terms of biological role, cell membrane polyamine/proton antiporter, involved in the detoxification of excess polyamines in the cytoplasm. Recognizes spermine, but not spermidine. In Saccharomyces cerevisiae (strain ATCC 204508 / S288c) (Baker's yeast), this protein is Polyamine transporter 3 (TPO3).